The sequence spans 710 residues: Dual specificity protein kinase shkE (710 aa).

3 stretches are compositionally biased toward low complexity: residues 83–94 (DVSDSNNNNSTS), 107–129 (NNNN…NNNN), and 197–208 (QKQQQSQASIQQ). Disordered regions lie at residues 83 to 136 (DVSD…PTVI) and 189 to 232 (QHLT…IPPE). One can recognise a Protein kinase domain in the interval 237–495 (DVKTDLLGGG…EVTQRMNEVL (259 aa)). ATP contacts are provided by residues 243 to 251 (LGGGAYGKV) and Lys-264. Asp-359 (proton acceptor) is an active-site residue. The region spanning 597–707 (WFHFDISRDI…CPITEIKVPY (111 aa)) is the SH2 domain.

Belongs to the protein kinase superfamily. Ser/Thr protein kinase family. SH2 domain-containing protein kinase subfamily.

It is found in the membrane. The enzyme catalyses L-seryl-[protein] + ATP = O-phospho-L-seryl-[protein] + ADP + H(+). It carries out the reaction L-threonyl-[protein] + ATP = O-phospho-L-threonyl-[protein] + ADP + H(+). Its function is as follows. Required for proper chemotaxis and phagocytosis; proper spatiotemporal control of F-actin levels in chemotaxing cells. Negative regulator of the PI3K (phosphatidylinositol 3 kinase) pathway. Predominantly phosphorylates serines and threonines and tyrosines at a lower level. This chain is Dual specificity protein kinase shkE (shkE), found in Dictyostelium discoideum (Social amoeba).